A 491-amino-acid polypeptide reads, in one-letter code: Probable glycine dehydrogenase (decarboxylating) subunit 2 (491 aa).

K273 carries the N6-(pyridoxal phosphate)lysine modification.

This sequence belongs to the GcvP family. C-terminal subunit subfamily. In terms of assembly, the glycine cleavage system is composed of four proteins: P, T, L and H. In this organism, the P 'protein' is a heterodimer of two subunits. Pyridoxal 5'-phosphate serves as cofactor.

The enzyme catalyses N(6)-[(R)-lipoyl]-L-lysyl-[glycine-cleavage complex H protein] + glycine + H(+) = N(6)-[(R)-S(8)-aminomethyldihydrolipoyl]-L-lysyl-[glycine-cleavage complex H protein] + CO2. The glycine cleavage system catalyzes the degradation of glycine. The P protein binds the alpha-amino group of glycine through its pyridoxal phosphate cofactor; CO(2) is released and the remaining methylamine moiety is then transferred to the lipoamide cofactor of the H protein. The protein is Probable glycine dehydrogenase (decarboxylating) subunit 2 of Bacillus cereus (strain ATCC 10987 / NRS 248).